Here is an 821-residue protein sequence, read N- to C-terminus: Tip elongation aberrant protein Tea4 (821 aa).

2 stretches are compositionally biased toward polar residues: residues 1-11 (MLHMNSASSAD) and 21-31 (DPTQQNDSTII). The segment at 1–36 (MLHMNSASSADSMEIMESHFDPTQQNDSTIIESRYS) is disordered. Position 35 is a phosphotyrosine (Tyr-35). Ser-36 is subject to Phosphoserine. Tyr-40 is subject to Phosphotyrosine. Residues 51–79 (ISGENSEPQTVASQEISDSQEEDTTLTSS) form a disordered region. The segment covering 53 to 67 (GENSEPQTVASQEIS) has biased composition (polar residues). Residues 130–191 (IDCNFVHAIR…PAEYIETPSE (62 aa)) form the SH3 domain. 5 disordered regions span residues 267–292 (LEIE…DHVT), 333–352 (SSTT…FSSA), 473–500 (DSFD…MPNN), 529–570 (SPRL…SSLL), and 664–697 (DASS…SFSS). The segment covering 268–282 (EIEFSDSSDSSLSAE) has biased composition (low complexity). Positions 283–292 (YRSESEDHVT) are enriched in basic and acidic residues. Polar residues-rich tracts occupy residues 333 to 350 (SSTT…SKFS) and 473 to 484 (DSFDTSNVTQDA). Residues 527 to 821 (LLSPRLYSSS…EMASLLNTNR (295 aa)) are interaction with tea1. Over residues 529 to 541 (SPRLYSSSTPSSP) the composition is skewed to low complexity. Positions 554–563 (ENRKQADKVE) are enriched in basic and acidic residues. Residues 599 to 821 (KAFSQSSIDL…EMASLLNTNR (223 aa)) form an interaction with win1 region. Low complexity predominate over residues 665 to 674 (ASSAIPSSSI). The span at 675–687 (SHDEDLLPRKNTE) shows a compositional bias: basic and acidic residues.

An essential component of the tea1 cell-end complex. Interacts with win1, tea1 and for3. Interacts with tip1 in the presence of tea1.

It localises to the cytoplasm. Its subcellular location is the cytoskeleton. Cell polarity factor essential for the bipolar localization and function of structures containing the cell-end marker tea1 during the normal cell cycle. Regulates cell polarity in complex with tea1 and together with the stress signaling MAPK cascade, contributes to cell polarity maintenance under stress conditions. Required for the localization of for3 at the cell tip specifically during initiation of bipolar growth. During the new end take off (NETO), formation of a protein complex that includes tea1, tea4 and for3 is necessary and sufficient for the establishment of cell polarity and localized actin assembly at new cell ends. The polypeptide is Tip elongation aberrant protein Tea4 (Schizosaccharomyces pombe (strain 972 / ATCC 24843) (Fission yeast)).